A 302-amino-acid chain; its full sequence is Heme A synthase (302 aa).

Residues 1-6 (MNKALK) lie on the Cytoplasmic side of the membrane. A helical membrane pass occupies residues 7–27 (GLGIITTIAMLFVLIGGALVT). Residues 28 to 61 (KTGSGMGCGRSWPLCNGSIFPALTLESIIEWSHR) are Extracellular-facing. Cys-35 and Cys-42 are disulfide-bonded. Residue Glu-57 is part of the active site. His-60 contributes to the heme o binding site. Residues 62–82 (FVSGTSGVLVLALAIWTWKKI) form a helical membrane-spanning segment. Residues 83–91 (GHIRETKFL) lie on the Cytoplasmic side of the membrane. The chain crosses the membrane as a helical span at residues 92–112 (AVMSVVFLILQALLGAAAVVF). Residues 113–120 (GSSALIMA) lie on the Extracellular side of the membrane. A helical transmembrane segment spans residues 121 to 141 (LHFGISLISFASVLLLTLLVF). His-122 provides a ligand contact to heme o. Residues 142 to 158 (EADSKQKSESFYIGKTM) are Cytoplasmic-facing. The helical transmembrane segment at 159–179 (QFHMIGIIIYTYVVVYTGAYV) threads the bilayer. Over 180-208 (RHTSSSLACLDFPMCSTENGWLPGKFHEW) the chain is Extracellular. A disulfide bond links Cys-188 and Cys-194. A helical transmembrane segment spans residues 209-229 (VQMGHRAAALLLFAWIIAAAV). His-213 provides a ligand contact to heme b. Residues 230–242 (HAARQYKNQKRIY) lie on the Cytoplasmic side of the membrane. The chain crosses the membrane as a helical span at residues 243-263 (WGWMISLILIILQAASGIAVV). Topologically, residues 264–272 (YSRLDLGFA) are extracellular. The chain crosses the membrane as a helical span at residues 273-293 (LAHAFFISCLFGILCYFLLLV). His-275 is a heme b binding site. Over 294–302 (ARYRRQVQK) the chain is Cytoplasmic.

The protein belongs to the COX15/CtaA family. Type 1 subfamily. Interacts with CtaB. Requires heme b as cofactor.

Its subcellular location is the cell membrane. It carries out the reaction Fe(II)-heme o + 2 A + H2O = Fe(II)-heme a + 2 AH2. The protein operates within porphyrin-containing compound metabolism; heme A biosynthesis; heme A from heme O: step 1/1. Catalyzes the conversion of heme O to heme A by two successive hydroxylations of the methyl group at C8. The first hydroxylation forms heme I, the second hydroxylation results in an unstable dihydroxymethyl group, which spontaneously dehydrates, resulting in the formyl group of heme A. This Bacillus licheniformis (strain ATCC 14580 / DSM 13 / JCM 2505 / CCUG 7422 / NBRC 12200 / NCIMB 9375 / NCTC 10341 / NRRL NRS-1264 / Gibson 46) protein is Heme A synthase.